Reading from the N-terminus, the 608-residue chain is Tectonic-3 (608 aa).

An N-terminal signal peptide occupies residues 1 to 22 (MRTPQLALLQVFLLMFPDGVRP). Residues 23–58 (QPSSSPSGAVPTSLDLQPGTVGGTLQSSSEATATRP) are disordered. The Extracellular segment spans residues 23-586 (QPSSSPSGAV…AFSRGVSSQK (564 aa)). Over residues 45–54 (GTLQSSSEAT) the composition is skewed to polar residues. Residues Asn78, Asn179, and Asn347 are each glycosylated (N-linked (GlcNAc...) asparagine). Residues 587-607 (CSVSPVLILCLLLLGVLNLET) traverse the membrane as a helical segment. Position 608 (Thr608) is a topological domain, cytoplasmic.

It belongs to the tectonic family. In terms of assembly, part of the tectonic-like complex (also named B9 complex).

The protein localises to the membrane. In terms of biological role, part of the tectonic-like complex which is required for tissue-specific ciliogenesis and may regulate ciliary membrane composition. May be involved in apoptosis regulation. Necessary for signal transduction through the sonic hedgehog (Shh) signaling pathway. This is Tectonic-3 (TCTN3) from Macaca fascicularis (Crab-eating macaque).